We begin with the raw amino-acid sequence, 177 residues long: Nucleoside-triphosphatase THEP1 (177 aa).

ATP-binding positions include Gly-10 to Thr-17 and Cys-101 to Gly-108.

This sequence belongs to the THEP1 NTPase family.

It catalyses the reaction a ribonucleoside 5'-triphosphate + H2O = a ribonucleoside 5'-diphosphate + phosphate + H(+). Functionally, has nucleotide phosphatase activity towards ATP, GTP, CTP, TTP and UTP. May hydrolyze nucleoside diphosphates with lower efficiency. The protein is Nucleoside-triphosphatase THEP1 of Natranaerobius thermophilus (strain ATCC BAA-1301 / DSM 18059 / JW/NM-WN-LF).